The sequence spans 94 residues: Large ribosomal subunit protein bL27 (94 aa).

Residues 1–9 (MLKLNLQFF) constitute a propeptide that is removed on maturation. Positions 13–32 (KGLGSTKNGRDSESKRLGAK) are disordered. Positions 20-32 (NGRDSESKRLGAK) are enriched in basic and acidic residues.

It belongs to the bacterial ribosomal protein bL27 family. Post-translationally, the N-terminus is cleaved by ribosomal processing cysteine protease Prp.

This is Large ribosomal subunit protein bL27 from Staphylococcus saprophyticus subsp. saprophyticus (strain ATCC 15305 / DSM 20229 / NCIMB 8711 / NCTC 7292 / S-41).